The primary structure comprises 239 residues: 7-cyano-7-deazaguanine synthase (239 aa).

Position 13–23 (13–23 (FSGGQDSTTCL)) interacts with ATP. 4 residues coordinate Zn(2+): Cys-192, Cys-201, Cys-204, and Cys-207.

The protein belongs to the QueC family. The cofactor is Zn(2+).

The enzyme catalyses 7-carboxy-7-deazaguanine + NH4(+) + ATP = 7-cyano-7-deazaguanine + ADP + phosphate + H2O + H(+). Its pathway is purine metabolism; 7-cyano-7-deazaguanine biosynthesis. In terms of biological role, catalyzes the ATP-dependent conversion of 7-carboxy-7-deazaguanine (CDG) to 7-cyano-7-deazaguanine (preQ(0)). This chain is 7-cyano-7-deazaguanine synthase, found in Shewanella sp. (strain MR-4).